Consider the following 84-residue polypeptide: Exodeoxyribonuclease 7 small subunit (84 aa).

This sequence belongs to the XseB family. Heterooligomer composed of large and small subunits.

The protein resides in the cytoplasm. The catalysed reaction is Exonucleolytic cleavage in either 5'- to 3'- or 3'- to 5'-direction to yield nucleoside 5'-phosphates.. In terms of biological role, bidirectionally degrades single-stranded DNA into large acid-insoluble oligonucleotides, which are then degraded further into small acid-soluble oligonucleotides. This is Exodeoxyribonuclease 7 small subunit from Yersinia pseudotuberculosis serotype O:3 (strain YPIII).